The sequence spans 161 residues: Ribonuclease H (161 aa).

The RNase H type-1 domain maps to 5 to 149 (EKLAIAAATD…VDAIAVAFSK (145 aa)). Residues Asp14, Glu53, Asp78, and Asp141 each coordinate Mg(2+).

Belongs to the RNase H family. In terms of assembly, monomer. The cofactor is Mg(2+).

It localises to the cytoplasm. The catalysed reaction is Endonucleolytic cleavage to 5'-phosphomonoester.. Endonuclease that specifically degrades the RNA of RNA-DNA hybrids. The polypeptide is Ribonuclease H (Prochlorococcus marinus (strain NATL1A)).